We begin with the raw amino-acid sequence, 305 residues long: Protoheme IX farnesyltransferase (305 aa).

9 consecutive transmembrane segments (helical) span residues 31 to 51 (VISL…YSVH), 52 to 72 (PFIA…AGAI), 96 to 118 (VIES…FFMA), 123 to 145 (LLAS…IWLK), 151 to 171 (NIVI…AAVS), 179 to 199 (IILF…LALF), 225 to 245 (ILIY…IGMN), 247 to 267 (FIYL…AGSL), and 281 to 301 (FAYS…TNTI).

Belongs to the UbiA prenyltransferase family. Protoheme IX farnesyltransferase subfamily.

It localises to the cell inner membrane. It carries out the reaction heme b + (2E,6E)-farnesyl diphosphate + H2O = Fe(II)-heme o + diphosphate. It functions in the pathway porphyrin-containing compound metabolism; heme O biosynthesis; heme O from protoheme: step 1/1. Functionally, converts heme B (protoheme IX) to heme O by substitution of the vinyl group on carbon 2 of heme B porphyrin ring with a hydroxyethyl farnesyl side group. In Rickettsia massiliae (strain Mtu5), this protein is Protoheme IX farnesyltransferase.